A 155-amino-acid polypeptide reads, in one-letter code: MFDILVYLFESYIHANACPASDQLARKLSAAGFEDEEINEALDWLAGLRRVAAETHPCVAPSRSAVRLYSDYECTRLSAACRGFLTFLEGAGVLDAVSRELIVERAVALSNFTITLGRLKVIVLMVLWQREQPVDTLIIDELLSSDDDEGAPLLH.

Belongs to the Smg family.

This chain is Protein Smg homolog, found in Azoarcus sp. (strain BH72).